Consider the following 155-residue polypeptide: SsrA-binding protein (155 aa).

The protein belongs to the SmpB family.

It localises to the cytoplasm. Functionally, required for rescue of stalled ribosomes mediated by trans-translation. Binds to transfer-messenger RNA (tmRNA), required for stable association of tmRNA with ribosomes. tmRNA and SmpB together mimic tRNA shape, replacing the anticodon stem-loop with SmpB. tmRNA is encoded by the ssrA gene; the 2 termini fold to resemble tRNA(Ala) and it encodes a 'tag peptide', a short internal open reading frame. During trans-translation Ala-aminoacylated tmRNA acts like a tRNA, entering the A-site of stalled ribosomes, displacing the stalled mRNA. The ribosome then switches to translate the ORF on the tmRNA; the nascent peptide is terminated with the 'tag peptide' encoded by the tmRNA and targeted for degradation. The ribosome is freed to recommence translation, which seems to be the essential function of trans-translation. This is SsrA-binding protein from Streptococcus pneumoniae (strain 70585).